Reading from the N-terminus, the 411-residue chain is Arginine deiminase (411 aa).

Cysteine 401 serves as the catalytic Amidino-cysteine intermediate.

It belongs to the arginine deiminase family.

Its subcellular location is the cytoplasm. It carries out the reaction L-arginine + H2O = L-citrulline + NH4(+). Its pathway is amino-acid degradation; L-arginine degradation via ADI pathway; carbamoyl phosphate from L-arginine: step 1/2. This Streptococcus equi subsp. zooepidemicus (strain MGCS10565) protein is Arginine deiminase.